The chain runs to 513 residues: Histidine ammonia-lyase (513 aa).

The segment at residues 144-146 (ASG) is a cross-link (5-imidazolinone (Ala-Gly)). Ser-145 bears the 2,3-didehydroalanine (Ser) mark.

This sequence belongs to the PAL/histidase family. In terms of processing, contains an active site 4-methylidene-imidazol-5-one (MIO), which is formed autocatalytically by cyclization and dehydration of residues Ala-Ser-Gly.

It is found in the cytoplasm. The catalysed reaction is L-histidine = trans-urocanate + NH4(+). Its pathway is amino-acid degradation; L-histidine degradation into L-glutamate; N-formimidoyl-L-glutamate from L-histidine: step 1/3. The sequence is that of Histidine ammonia-lyase from Streptococcus pyogenes serotype M6 (strain ATCC BAA-946 / MGAS10394).